We begin with the raw amino-acid sequence, 177 residues long: Inorganic pyrophosphatase (177 aa).

The substrate site is built by K31, R45, and Y57. Mg(2+) contacts are provided by D67, D72, and D104. Residue Y142 coordinates substrate.

Belongs to the PPase family. In terms of assembly, homohexamer. The cofactor is Mg(2+).

It localises to the cytoplasm. The catalysed reaction is diphosphate + H2O = 2 phosphate + H(+). Functionally, catalyzes the hydrolysis of inorganic pyrophosphate (PPi) forming two phosphate ions. This is Inorganic pyrophosphatase from Neisseria meningitidis serogroup A / serotype 4A (strain DSM 15465 / Z2491).